The following is a 216-amino-acid chain: MIF4G domain-containing protein A (216 aa).

In terms of domain architecture, MIF4G spans Asp2 to Gly199.

Belongs to the MIF4GD family. Interacts with eif4g1, eif4g2 and slbp; probably tethered by SLBP to the 3'-end of mRNAs ending with the histone stem-loop, it also interacts with eif4g1 which is bound to their 5'-end.

The protein localises to the cytoplasm. It localises to the nucleus. Functions in replication-dependent translation of histone mRNAs which differ from other eukaryotic mRNAs in that they do not end with a poly-A tail but a stem-loop. May participate in circularizing those mRNAs specifically enhancing their translation. This chain is MIF4G domain-containing protein A (mif4gda), found in Danio rerio (Zebrafish).